A 3096-amino-acid chain; its full sequence is Cilia- and flagella-associated protein 54 (3096 aa).

Low complexity predominate over residues 1 to 45 (MAAQGSPSSSPSDDSTTSGSLPELPPTSTATSRSPPESKGSSRSS). 2 disordered regions span residues 1 to 46 (MAAQ…RSSL) and 1248 to 1267 (SNEQ…LKTK).

The protein belongs to the CFAP54 family.

The protein localises to the cytoplasm. The protein resides in the cytoskeleton. It localises to the cilium axoneme. In terms of biological role, required for assembly and function of cilia and flagella. This is Cilia- and flagella-associated protein 54 from Homo sapiens (Human).